Here is a 484-residue protein sequence, read N- to C-terminus: Bifunctional protein HldE (484 aa).

Residues 1-320 (MDFSSITVLC…AELNAQDADA (320 aa)) form a ribokinase region. 195–198 (NARE) contacts ATP. Aspartate 265 is a catalytic residue. Positions 349 to 484 (FTNGCFDIIH…RIRAAGAADR (136 aa)) are cytidylyltransferase.

This sequence in the N-terminal section; belongs to the carbohydrate kinase PfkB family. The protein in the C-terminal section; belongs to the cytidylyltransferase family. In terms of assembly, homodimer.

The catalysed reaction is D-glycero-beta-D-manno-heptose 7-phosphate + ATP = D-glycero-beta-D-manno-heptose 1,7-bisphosphate + ADP + H(+). The enzyme catalyses D-glycero-beta-D-manno-heptose 1-phosphate + ATP + H(+) = ADP-D-glycero-beta-D-manno-heptose + diphosphate. The protein operates within nucleotide-sugar biosynthesis; ADP-L-glycero-beta-D-manno-heptose biosynthesis; ADP-L-glycero-beta-D-manno-heptose from D-glycero-beta-D-manno-heptose 7-phosphate: step 1/4. It functions in the pathway nucleotide-sugar biosynthesis; ADP-L-glycero-beta-D-manno-heptose biosynthesis; ADP-L-glycero-beta-D-manno-heptose from D-glycero-beta-D-manno-heptose 7-phosphate: step 3/4. Catalyzes the phosphorylation of D-glycero-D-manno-heptose 7-phosphate at the C-1 position to selectively form D-glycero-beta-D-manno-heptose-1,7-bisphosphate. Functionally, catalyzes the ADP transfer from ATP to D-glycero-beta-D-manno-heptose 1-phosphate, yielding ADP-D-glycero-beta-D-manno-heptose. This chain is Bifunctional protein HldE, found in Gluconacetobacter diazotrophicus (strain ATCC 49037 / DSM 5601 / CCUG 37298 / CIP 103539 / LMG 7603 / PAl5).